A 376-amino-acid polypeptide reads, in one-letter code: Thymidine kinase (376 aa).

Residues 1–44 (MASYPGHQHASAFDQAARSRGHSNRRTALRPRRQQEATEVRPEQ) form a disordered region. Basic residues predominate over residues 19–32 (SRGHSNRRTALRPR). Basic and acidic residues predominate over residues 33–44 (RQQEATEVRPEQ). 56–63 (GPHGMGKT) is an ATP binding site. Glu-83 (proton acceptor) is an active-site residue. Substrate is bound by residues Tyr-101 and Gln-125. Position 216 (Arg-216) interacts with ATP. Residue Arg-222 participates in substrate binding. Positions 260 to 280 (GQLSGTAVPPQGAEPQSNAGP) are disordered.

The protein belongs to the herpesviridae thymidine kinase family. As to quaternary structure, homodimer.

The catalysed reaction is thymidine + ATP = dTMP + ADP + H(+). Functionally, catalyzes the transfer of the gamma-phospho group of ATP to thymidine to generate dTMP in the salvage pathway of pyrimidine synthesis. The dTMP serves as a substrate for DNA polymerase during viral DNA replication. Allows the virus to be reactivated and to grow in non-proliferative cells lacking a high concentration of phosphorylated nucleic acid precursors. This is Thymidine kinase from Human herpesvirus 1 (strain HFEM) (HHV-1).